A 508-amino-acid chain; its full sequence is GMP synthase [glutamine-hydrolyzing] (508 aa).

The Glutamine amidotransferase type-1 domain maps to 1–189 (MILVLDFGSQ…ALLVCDCEKT (189 aa)). The active-site Nucleophile is the Cys-78. Catalysis depends on residues His-163 and Glu-165. The GMPS ATP-PPase domain maps to 190 to 383 (WGMQHFAQRE…LGISQDFLMR (194 aa)). 217–223 (SGGVDST) lines the ATP pocket.

In terms of assembly, homodimer.

The catalysed reaction is XMP + L-glutamine + ATP + H2O = GMP + L-glutamate + AMP + diphosphate + 2 H(+). Its pathway is purine metabolism; GMP biosynthesis; GMP from XMP (L-Gln route): step 1/1. In terms of biological role, catalyzes the synthesis of GMP from XMP. The polypeptide is GMP synthase [glutamine-hydrolyzing] (Helicobacter pylori (strain HPAG1)).